Reading from the N-terminus, the 547-residue chain is Ribosomal lysine N-methyltransferase set10 (547 aa).

The SET domain maps to 17–235 (KSVEFIQSRD…KGNQLFNNYG (219 aa)). Tyr-234 contributes to the S-adenosyl-L-methionine binding site.

This sequence belongs to the class V-like SAM-binding methyltransferase superfamily. RKM1 family.

The protein localises to the cytoplasm. Its subcellular location is the nucleus. S-adenosyl-L-methionine-dependent protein-lysine N-methyltransferase that methylates ribosomal protein L23 (rpl23a and rpl23b). The protein is Ribosomal lysine N-methyltransferase set10 (set10) of Schizosaccharomyces pombe (strain 972 / ATCC 24843) (Fission yeast).